The following is a 296-amino-acid chain: MAVSLACQAPRTPMAIPPSYADLGKSARDIFNKGYGFGLVKLDVKTKSASGVEFTTSGSSNTDTGKVNGSLETKYKWAEYGLTFTEKWNTDNTLGTEIAIEDQIAKGLKLTFDTTFSPNTGKKSGKIKSAYKRECLNLGCDVDFDFAGPAIHGSAVFGYEGWLAGYQMTFDSAKSKLTRNNFSVGYKTGDFQLHTNVNDGSEFGGSIYQKVSDNLETAVNLAWTAGSNSTRFGIAAKYKLDSTASISAKVNNSSLVGVGYTQTLRPGVKLTLSALIDGKSINAGGHKLGLGLELEA.

Lysine 25 serves as a coordination point for ATP. Residue lysine 25 forms a Glycyl lysine isopeptide (Lys-Gly) (interchain with G-Cter in ubiquitin) linkage. A Phosphoserine modification is found at serine 26. Position 33 (lysine 33) interacts with ATP. Residue lysine 33 is modified to N6-acetyllysine; alternate. Position 33 is an N6-succinyllysine; alternate (lysine 33). Residue lysine 33 forms a Glycyl lysine isopeptide (Lys-Gly) (interchain with G-Cter in ubiquitin); alternate linkage. Transmembrane regions (beta stranded) follow at residues 39-48 (LVKLDVKTKS) and 52-60 (VEFTTSGSS). Glycyl lysine isopeptide (Lys-Gly) (interchain with G-Cter in ubiquitin) cross-links involve residues lysine 66 and lysine 74. Residues 67-77 (VNGSLETKYKW) traverse the membrane as a beta stranded segment. Tyrosine 80 carries the phosphotyrosine modification. 3 consecutive transmembrane segments (beta stranded) span residues 82 to 89 (LTFTEKWN), 93 to 102 (TLGTEIAIED), and 108 to 117 (LKLTFDTTFS). Threonine 120 is modified (phosphothreonine). Lysine 122 carries the post-translational modification N6-acetyllysine; alternate. A Glycyl lysine isopeptide (Lys-Gly) (interchain with G-Cter in ubiquitin); alternate cross-link involves residue lysine 122. Lysine 123 is covalently cross-linked (Glycyl lysine isopeptide (Lys-Gly) (interchain with G-Cter in ubiquitin)). A run of 4 beta stranded transmembrane segments spans residues 124 to 133 (SGKIKSAYKR), 136 to 143 (LNLGCDVD), 150 to 158 (AIHGSAVFG), and 163 to 171 (LAGYQMTFD). A Glycyl lysine isopeptide (Lys-Gly) (interchain with G-Cter in ubiquitin) cross-link involves residue lysine 174. A run of 6 beta stranded transmembrane segments spans residues 176–188 (KLTR…GYKT), 191–198 (FQLHTNVN), 202–211 (EFGGSIYQKV), 215–224 (LETAVNLAWT), 231–240 (RFGIAAKYKL), and 244–251 (ASISAKVN). Residue serine 206 is modified to Phosphoserine. Serine 253 is subject to Phosphoserine. Residues 255 to 257 (LVG) and 273 to 277 (SALID) each bind NAD(+). 2 beta stranded membrane passes run 255–264 (LVGVGYTQTL) and 267–276 (GVKLTLSALI). Lysine 279 bears the N6-acetyllysine; alternate mark. Lysine 279 participates in a covalent cross-link: Glycyl lysine isopeptide (Lys-Gly) (interchain with G-Cter in ubiquitin); alternate. Residues 286 to 295 (HKLGLGLELE) traverse the membrane as a beta stranded segment. A Glycyl lysine isopeptide (Lys-Gly) (interchain with G-Cter in ubiquitin) cross-link involves residue lysine 287.

The protein belongs to the eukaryotic mitochondrial porin family. Monomer, homodimer and higher order oligomers; formation of higher order structures is necessary for scramblase activity. In terms of processing, ubiquitinated by PRKN during mitophagy, leading to its degradation and enhancement of mitophagy. Deubiquitinated by USP30.

It is found in the mitochondrion outer membrane. The protein localises to the membrane. The catalysed reaction is chloride(in) = chloride(out). It carries out the reaction K(+)(in) = K(+)(out). The enzyme catalyses a 1,2-diacyl-sn-glycero-3-phospho-L-serine(in) = a 1,2-diacyl-sn-glycero-3-phospho-L-serine(out). It catalyses the reaction a 1,2-diacyl-sn-glycero-3-phosphocholine(in) = a 1,2-diacyl-sn-glycero-3-phosphocholine(out). The catalysed reaction is a 1,2-diacyl-sn-glycero-3-phospho-(1D-myo-inositol)(in) = a 1,2-diacyl-sn-glycero-3-phospho-(1D-myo-inositol)(out). Its function is as follows. Non-selective voltage-gated ion channel that mediates the transport of anions and cations through the mitochondrion outer membrane and plasma membrane. The channel adopts an open conformation at zero mV and a closed conformation at both positive and negative potentials. There are two populations of channels; the main that functions in a lower open-state conductance with lower ion selectivity, that switch, in a voltage-dependent manner, from the open to a low-conducting 'closed' state and the other that has a normal ion selectivity in the typical high conductance, 'open' state. Binds various lipids, including the sphingolipid ceramide, the phospholipid phosphatidylcholine, and the sterols cholesterol and oxysterol. Binding of ceramide promotes the mitochondrial outer membrane permeabilization (MOMP) apoptotic pathway. In terms of biological role, catalyzes the scrambling of phospholipids across the outer mitochondrial membrane; the mechanism is unrelated to channel activity and is capable of translocating both anionic and zwitterionic phospholipids. In Meleagris gallopavo (Wild turkey), this protein is Non-selective voltage-gated ion channel VDAC2.